Here is a 557-residue protein sequence, read N- to C-terminus: Vacuolar protein sorting-associated protein 30 (557 aa).

Disordered stretches follow at residues 93–149 (DDDN…ENQQ) and 218–238 (NKEI…SEKE). Over residues 135–147 (DEEEQEATDEDEN) the composition is skewed to acidic residues. Threonine 142 is subject to Phosphothreonine. Residues 189–322 (LINRLKSEYD…QLDKLRKINI (134 aa)) are a coiled coil. The tract at residues 320–539 (INIFNATFKI…LAFSSNLLSK (220 aa)) is BARA. The tract at residues 515–540 (WTTAMKFLLTNVKWLLAFSSNLLSKS) is required for membrane-association, autophagic function during starvation and normal autophagosome morphology.

This sequence belongs to the beclin family. In terms of assembly, component of the autophagy-specific VPS34 PI3-kinase complex I composed of VPS15, VPS30, VPS34, ATG14 and ATG38; and of the VPS34 PI3-kinase complex II composed of VPS15, VPS30, VPS34 and VPS38.

The protein localises to the endosome membrane. It is found in the vacuole membrane. The protein resides in the preautophagosomal structure membrane. Required for cytoplasm to vacuole transport (Cvt), autophagy, nucleophagy, and mitophagy, as a part of the autophagy-specific VPS34 PI3-kinase complex I. This complex is essential to recruit the ATG8-phosphatidylinositol conjugate and the ATG12-ATG5 conjugate to the pre-autophagosomal structure. Also involved in endosome-to-Golgi retrograde transport as part of the VPS34 PI3-kinase complex II. This second complex is required for the endosome-to-Golgi retrieval of PEP1 and KEX2, and the recruitment of VPS5 and VPS7, two components of the retromer complex, to endosomal membranes (probably through the synthesis of a specific pool of phosphatidylinositol 3-phosphate recruiting the retromer to the endosomes). Also plays a role in regulation of filamentous growth. This Saccharomyces cerevisiae (strain ATCC 204508 / S288c) (Baker's yeast) protein is Vacuolar protein sorting-associated protein 30.